The sequence spans 1388 residues: Collagen alpha-1(XV) chain (1388 aa).

The N-terminal stretch at 1 to 27 (MAPRRNNGQCWCLLMLLSVSTPLPAVT) is a signal peptide. In terms of domain architecture, Laminin G-like spans 66-249 (AYSFGPGANV…SSASGETSGL (184 aa)). The disordered stretch occupies residues 223-250 (TVHPDPRTPEELCDPEESSASGETSGLQ). The tract at residues 229–555 (RTPEELCDPE…WITPAQREHV (327 aa)) is nonhelical region 1 (NC1). A compositionally biased stretch (polar residues) spans 240-249 (SSASGETSGL). O-linked (Xyl...) (chondroitin sulfate) serine glycans are attached at residues Ser243 and Ser247. Residue Thr265 is glycosylated (O-linked (GalNAc...) threonine). The segment at 266–301 (QASPKEAKVEPINTPPTPSSPFEDMELSGEPVPEGT) is disordered. N-linked (GlcNAc...) asparagine glycans are attached at residues Asn306 and Asn324. O-linked (Xyl...) (chondroitin sulfate) serine glycosylation is present at Ser343. A run of 4 repeats spans residues 358–408 (AATA…EERL), 409–459 (AATA…EDSL), 460–509 (TTAA…EEDL), and 510–555 (AAAT…REHV). Residues 358 to 555 (AATAAGLAEV…WITPAQREHV (198 aa)) are 4 X tandem repeats. Residues 371 to 795 (TAGEAEASSV…VGPPGPRGPP (425 aa)) are disordered. Residues 379-392 (SVPTGGPTLSMSTE) are compositionally biased toward polar residues. The span at 409–420 (AATAAGEAEALA) shows a compositional bias: low complexity. Over residues 452–472 (GPSSEDSLTTAAAATEVSLST) the composition is skewed to polar residues. The segment covering 510–527 (AAATTEEPLITAGGEESG) has biased composition (low complexity). A compositionally biased stretch (pro residues) spans 528–540 (SPPPDGPPLPLPT). The triple-helical region 1 (COL1) stretch occupies residues 556 to 573 (GMKGQAGPKGEKGDAGEE). The interval 574 to 618 (LPGPPEPSGPVGPTAGAEAEGSGLGWGSDVGSGSGDLVGSEQLLR) is nonhelical region 2 (NC2). Residues 595 to 609 (SGLGWGSDVGSGSGD) are compositionally biased toward gly residues. 2 Collagen-like domains span residues 619-680 (GPPG…MKGE) and 681-731 (KGAR…PPGP). Residues 619-732 (GPPGPPGPPG…PGPPGPPGPG (114 aa)) are triple-helical region 2 (COL2). The span at 620 to 630 (PPGPPGPPGLP) shows a compositional bias: pro residues. A glycan (N-linked (GlcNAc...) asparagine) is linked at Asn687. A compositionally biased stretch (pro residues) spans 716-731 (VMGPPGPPGPPGPPGP). A nonhelical region 3 (NC3) region spans residues 733-763 (CTMGLGFEDTEGSGSTQLLNEPKLSRPTAAI). A glycan (O-linked (Xyl...) (chondroitin sulfate) serine) is linked at Ser745. The tract at residues 764–798 (GLKGEKGDRGPKGERGMDGASIVGPPGPRGPPGHI) is triple-helical region 3 (COL3). Positions 766-780 (KGEKGDRGPKGERGM) are enriched in basic and acidic residues. The tract at residues 799 to 822 (KVLSNSLINITHGFMNFSDIPELV) is nonhelical region 4 (NC4). Asn807 and Asn814 each carry an N-linked (GlcNAc...) asparagine glycan. The Collagen-like 3 domain maps to 823–865 (GPPGPDGLPGLPGFPGPRGPKGDTGLPGFPGLKGEQGEKGEPG). Positions 823 to 867 (GPPGPDGLPGLPGFPGPRGPKGDTGLPGFPGLKGEQGEKGEPGAI) are triple-helical region 4 (COL4). A compositionally biased stretch (pro residues) spans 827–840 (PDGLPGLPGFPGPR). The interval 827 to 864 (PDGLPGLPGFPGPRGPKGDTGLPGFPGLKGEQGEKGEP) is disordered. Residues 868–878 (LTEDIPLERLM) are nonhelical region 5 (NC5). In terms of domain architecture, Collagen-like 4 spans 879 to 927 (GKKGEPGMHGAPGPMGPKGPPGHKGEFGLPGRPGRPGLNGLKGTKGDPG). Positions 879-949 (GKKGEPGMHG…PGPPGPPGAV (71 aa)) are triple-helical region 5 (COL5). The nonhelical region 6 (NC6) stretch occupies residues 950-983 (INIKGAIFPIPVRPHCKMPVDTAHPGSPELITFH). The interval 984 to 1013 (GVKGEKGSWGLPGSKGEKGDQGAQGPPGPP) is triple-helical region 6 (COL6). 2 disordered regions span residues 988-1016 (EKGS…PLDL) and 1029-1133 (ENGD…GSRN). Residues 1014–1027 (LDLAYLRHFLNNLK) form a nonhelical region 7 (NC7) region. The interval 1028–1045 (GENGDKGFKGEKGEKGDI) is triple-helical region 7 (COL7). Positions 1029–1044 (ENGDKGFKGEKGEKGD) are enriched in basic and acidic residues. The N-linked (GlcNAc...) asparagine glycan is linked to Asn1046. Positions 1046-1052 (NGSFLMS) are nonhelical region 8 (NC8). The interval 1053-1107 (GPPGLPGNPGPAGQKGETVVGPQGPPGAPGLPGPPGFGRPGDPGPPGPPGPPGPP) is triple-helical region 8 (COL8). 2 stretches are compositionally biased toward pro residues: residues 1075–1107 (QGPP…PGPP) and 1117–1126 (PGPPGPPGQP). The tract at residues 1108-1117 (AILGAAVALP) is nonhelical region 9 (NC9). The tract at residues 1118–1132 (GPPGPPGQPGLPGSR) is triple-helical region 9 (COL9). The tract at residues 1133 to 1388 (NLVTAFSNMD…ENSFMTDARK (256 aa)) is nonhelical region 10 (NC10). 2 disulfide bridges follow: Cys1237/Cys1377 and Cys1339/Cys1369.

The protein belongs to the multiplexin collagen family. As to quaternary structure, trimer; disulfide-linked. In terms of assembly, interacts moderately with EFEMP2. Prolines at the third position of the tripeptide repeating unit (G-X-Y) are hydroxylated in some or all of the chains. Post-translationally, O-glycosylated; with core 1 or possibly core 8 glycans. Contains chondroitin sulfate. Detected in fibroblasts and urine (at protein level). Detected in placenta (at protein level). Expressed predominantly in internal organs such as adrenal gland, pancreas and kidney.

It localises to the secreted. The protein localises to the extracellular space. It is found in the extracellular matrix. Functionally, structural protein that stabilizes microvessels and muscle cells, both in heart and in skeletal muscle. Its function is as follows. Restin potently inhibits angiogenesis. The protein is Collagen alpha-1(XV) chain (COL15A1) of Homo sapiens (Human).